Here is a 124-residue protein sequence, read N- to C-terminus: Small ribosomal subunit protein uS12 (124 aa).

The segment at 1–25 (MPTINQLIRKPRKSQKEKTASPALQ) is disordered. Asp-89 bears the 3-methylthioaspartic acid mark.

The protein belongs to the universal ribosomal protein uS12 family. In terms of assembly, part of the 30S ribosomal subunit. Contacts proteins S8 and S17. May interact with IF1 in the 30S initiation complex.

Functionally, with S4 and S5 plays an important role in translational accuracy. In terms of biological role, interacts with and stabilizes bases of the 16S rRNA that are involved in tRNA selection in the A site and with the mRNA backbone. Located at the interface of the 30S and 50S subunits, it traverses the body of the 30S subunit contacting proteins on the other side and probably holding the rRNA structure together. The combined cluster of proteins S8, S12 and S17 appears to hold together the shoulder and platform of the 30S subunit. This chain is Small ribosomal subunit protein uS12, found in Borrelia turicatae (strain 91E135).